The primary structure comprises 61 residues: MRCLPVFVILLLLIASTPSVDAQLKTKDDMSLASFHDNVKRILQIRTTEECCPFIVGCCSR.

Residues 1–22 (MRCLPVFVILLLLIASTPSVDA) form the signal peptide. Positions 23-46 (QLKTKDDMSLASFHDNVKRILQIR) are excised as a propeptide.

It belongs to the conotoxin T superfamily. In terms of processing, contains 2 disulfide bonds that can be either 'C1-C3, C2-C4' or 'C1-C4, C2-C3', since these disulfide connectivities have been observed for conotoxins with cysteine framework V (for examples, see AC P0DQQ7 and AC P81755). Expressed by the venom duct.

It is found in the secreted. This Conus textile (Cloth-of-gold cone) protein is Conotoxin TxMRCL-04.